The primary structure comprises 213 residues: Protein SRN2 (213 aa).

A VPS37 C-terminal domain is found at 128–213 (SKYVASWQDY…TWDKQGNLKY (86 aa)).

It belongs to the VPS37 family. As to quaternary structure, component of the ESCRT-I complex (endosomal sorting complex required for transport I) which consists of STP22, VPS28, SRN2 and MVB12 in a 1:1:1:1 stoichiometry. Interacts with STP22 and MVB12.

The protein resides in the cytoplasm. It is found in the endosome. It localises to the late endosome membrane. Functionally, component of the ESCRT-I complex, a regulator of vesicular trafficking process. Required for normal endocytic and biosynthetic traffic to the yeast vacuole. This chain is Protein SRN2 (SRN2), found in Saccharomyces cerevisiae (strain ATCC 204508 / S288c) (Baker's yeast).